Here is a 260-residue protein sequence, read N- to C-terminus: Adenosylcobinamide-GDP ribazoletransferase (260 aa).

Transmembrane regions (helical) follow at residues 43–63 (LVGTLVGLIAALVFYLTQFIF), 64–84 (PASVAVVLAMIATVLLTGGFH), 117–137 (GSLALMLALLLKFQLLSELAL), 143–163 (VAGGLVLGHTLSRAFAASIIF), 197–217 (VICLLLTGVGATLVILVTLFV), and 237–257 (TLGACQQILELVVYLVLLLLW).

This sequence belongs to the CobS family. Mg(2+) serves as cofactor.

The protein resides in the cell inner membrane. The catalysed reaction is alpha-ribazole + adenosylcob(III)inamide-GDP = adenosylcob(III)alamin + GMP + H(+). It catalyses the reaction alpha-ribazole 5'-phosphate + adenosylcob(III)inamide-GDP = adenosylcob(III)alamin 5'-phosphate + GMP + H(+). The protein operates within cofactor biosynthesis; adenosylcobalamin biosynthesis; adenosylcobalamin from cob(II)yrinate a,c-diamide: step 7/7. Its function is as follows. Joins adenosylcobinamide-GDP and alpha-ribazole to generate adenosylcobalamin (Ado-cobalamin). Also synthesizes adenosylcobalamin 5'-phosphate from adenosylcobinamide-GDP and alpha-ribazole 5'-phosphate. In Shewanella amazonensis (strain ATCC BAA-1098 / SB2B), this protein is Adenosylcobinamide-GDP ribazoletransferase.